A 693-amino-acid chain; its full sequence is Subtilisin-like protease SBT4.10 (693 aa).

An N-terminal signal peptide occupies residues 1-25 (MAKLREASFCALACVLVLFLSFVSA). Residues 26–113 (DTYNRQDKQV…VFPSKKYKLH (88 aa)) constitute a propeptide, activation peptide. The Inhibitor I9 domain maps to 35–113 (VYVVYMGSLP…VFPSKKYKLH (79 aa)). In terms of domain architecture, Peptidase S8 spans 117–536 (SWDFMGLKEG…SGHIDPIAAI (420 aa)). The active-site Charge relay system is the aspartate 145. Asparagine 176 carries N-linked (GlcNAc...) asparagine glycosylation. Catalysis depends on histidine 200, which acts as the Charge relay system. N-linked (GlcNAc...) asparagine glycans are attached at residues asparagine 215, asparagine 223, asparagine 368, asparagine 413, and asparagine 467. In terms of domain architecture, PA spans 354–396 (QYPLVYETSVEKCNNESLTTLALSFLTLTPQSNEQIISMFHTL). The active-site Charge relay system is serine 475. Residues asparagine 559, asparagine 603, and asparagine 613 are each glycosylated (N-linked (GlcNAc...) asparagine).

The protein belongs to the peptidase S8 family. The C-terminal propeptide is autocleaved.

The protein resides in the secreted. The protein is Subtilisin-like protease SBT4.10 of Arabidopsis thaliana (Mouse-ear cress).